Reading from the N-terminus, the 203-residue chain is E3 ubiquitin-protein ligase RNF152 (203 aa).

The segment at 12–55 (CQICFNYYSPRRRPKLLDCKHTCCSVCLQQMRTSQKDVRCPWCR) adopts an RING-type zinc-finger fold. The segment at 106–165 (ISKERALLPGDMGCRLLPGSQQKSVTVVTIPAEQQPLQGGAPQEAVEEEQDRRGVVKSST) is necessary for interaction with RRAGA. Residues 167–187 (SGVCTVILVACVLVFLLGIVL) traverse the membrane as a helical segment.

Belongs to the RNF152 family. In terms of assembly, interacts with RRAGA (inactive GDP-bound form); stimulated by amino acid starvation. Interacts with SEC16A. In terms of processing, ubiquitinated. Autoubiquitinated in vitro, leading to its degradation by the proteasome. Widely expressed.

The protein resides in the lysosome membrane. The catalysed reaction is S-ubiquitinyl-[E2 ubiquitin-conjugating enzyme]-L-cysteine + [acceptor protein]-L-lysine = [E2 ubiquitin-conjugating enzyme]-L-cysteine + N(6)-ubiquitinyl-[acceptor protein]-L-lysine.. Its pathway is protein modification; protein ubiquitination. Its function is as follows. E3 ubiquitin-protein ligase that acts as a negative regulator of mTORC1 signaling by mediating ubiquitination of RagA/RRAGA and RHEB. Catalyzes 'Lys-63'-linked polyubiquitination of RagA/RRAGA in response to amino acid starvation, thereby regulating mTORC1 signaling. Also mediates monoubiquitination of RHEB, promoting its association with the TSC-TBC complex and subsequent inhibition. Also mediates 'Lys-48'-linked polyubiquitination of target proteins and their subsequent targeting to the proteasome for degradation. Induces apoptosis when overexpressed. The protein is E3 ubiquitin-protein ligase RNF152 of Homo sapiens (Human).